Consider the following 146-residue polypeptide: Hemoglobin subunit beta-1 (146 aa).

A Globin domain is found at 2 to 146; sequence VWTNEERSII…VVSALGKQYH (145 aa). Heme b-binding residues include His63 and His92.

This sequence belongs to the globin family. Hb1 is a heterotetramer of two alpha chains and two beta-1 chains. As to expression, red blood cells.

Functionally, involved in oxygen transport from gills to the various peripheral tissues. This is Hemoglobin subunit beta-1 (hbb1) from Pseudaphritis urvillii (Congolli).